Consider the following 803-residue polypeptide: MANVSKKVSWSGRDRDDEEGAPLLRRTGQPDEETPLLNGAGPGARQSHSALFRIGQMNNVELDDELLDPEVDPPHTFPKEIPHNEKLLSLKYESLDYDNSENQLFLEEERRINHTAFRTVEIKRWVICALIGILTGLVACFIDIVVENLAGLKYRVIKDNIDKFTEKGGLSFSLLLWATLNSAFVLVGSVIVAFIEPVAAGSGIPQIKCFLNGVKIPHVVRLKTLVIKVSGVILSVVGGLAVGKEGPMIHSGSVIAAGISQGRSTSLKRDFKIFEYFRRDTEKRDFVSAGAAAGVSAAFGAPVGGVLFSLEEGASFWNQFLTWRIFFASMISTFTLNFVLSIYHGNMWDLSSPGLINFGRFDSEKMAYTIHEIPVFIAMGVVGGILGAVFNALNYWLTMFRIRYIHRPCLQVIEAMLVAAVTATVAFVLIYSSRDCQPLQGSSMSYPLQLFCADGEYNSMAAAFFNTPEKSVVSLFHDPPGSYNPMTLGLFTLVYFFLACWTYGLTVSAGVFIPSLLIGAAWGRLFGISMSYLTGAAIWADPGKYALMGAAAQLGGIVRMTLSLTVIMMEATSNVTYGFPIMLVLMTAKIVGDVFIEGLYDMHIQLQSVPFLHWEAPVTSHSLTAREVMSTPVTCLRRREKVGIIVDVLSDTASNHNGFPVVEDVGDTQPARLQGLILRSQLIVLLKHKVFVERSNMGLVQRRLRLKDFRDAYPRFPPIQSIHVSQDERECTMDLSEFMNPSPYTVPQEASLPRVFKLFRALGLRHLVVVDNHNQVVGLVTRKDLARYRLGKGGLEELSLAQT.

Residues Met-1–Gln-46 form a disordered region. The Cytoplasmic portion of the chain corresponds to Met-1–Arg-124. A Phosphoserine modification is found at Ser-9. 2 consecutive transmembrane segments (helical) span residues Trp-125 to Ile-157 and Phe-172 to Ile-195. Positions Gly-201–Pro-205 match the Selectivity filter part_1 motif. Ser-202 serves as a coordination point for chloride. The helical intramembrane region spans Ile-204–Leu-211. A run of 2 helical transmembrane segments spans residues Arg-221–Gly-239 and Glu-245–Gly-262. The Selectivity filter part_2 signature appears at Gly-243–Pro-247. Intramembrane regions (helical) lie at residues Phe-286–Ala-298 and Pro-302–Leu-310. 5 helical membrane passes run Phe-320–Val-339, Ile-373–Arg-403, Pro-408–Ile-430, Pro-485–Leu-505, and Gly-510–Leu-533. The Selectivity filter part_3 motif lies at Gly-510 to Pro-514. Residue Phe-512 participates in chloride binding. The helical intramembrane region spans Gly-543 to Ile-557. The segment at residues Val-558–Met-560 is an intramembrane region (note=Loop between two helices). Positions Thr-561–Thr-572 form an intramembrane region, helical. An intramembrane region (note=Loop between two helices) is located at residues Ser-573 to Thr-576. A helical membrane pass occupies residues Tyr-577–Phe-595. Topologically, residues Ile-596 to Thr-803 are cytoplasmic. Position 600 (Tyr-600) interacts with chloride. 2 CBS domains span residues Met-629 to Glu-693 and Met-739 to Glu-797. ATP is bound by residues His-656 to Gly-658 and Thr-781 to Asp-784. Position 799 is a phosphoserine (Ser-799).

It belongs to the chloride channel (TC 2.A.49) family. ClC-7/CLCN7 subfamily. As to quaternary structure, chloride channel 7 are heteromers of alpha (CLCN7) and beta (OSTM1) subunits. Brain, testis, muscle and kidney.

Its subcellular location is the lysosome membrane. The catalysed reaction is 2 chloride(in) + H(+)(out) = 2 chloride(out) + H(+)(in). Functionally, slowly voltage-gated channel mediating the exchange of chloride ions against protons. Functions as antiporter and contributes to the acidification of the lysosome lumen and may be involved in maintaining lysosomal pH. The CLC channel family contains both chloride channels and proton-coupled anion transporters that exchange chloride or another anion for protons. The presence of conserved gating glutamate residues is typical for family members that function as antiporters. The sequence is that of H(+)/Cl(-) exchange transporter 7 (Clcn7) from Rattus norvegicus (Rat).